Consider the following 990-residue polypeptide: Type III restriction-modification enzyme StyLTI Res subunit (990 aa).

The segment at 50–545 (NIDVKMETGT…GLRLPVDENG (496 aa)) is helicase-like domain. The VRR-NUC domain maps to 884-970 (LLKYDYPQQV…RQNINVEFAE (87 aa)). The segment at 913–937 (STTPDFVYRIERQDADSVYLLVETK) is endonuclease domain.

The protein belongs to the type III restriction-modification system Res protein family. As to quaternary structure, contains two different subunits: Res and Mod. The cofactor is Mg(2+). S-adenosyl-L-methionine is required as a cofactor.

It catalyses the reaction Endonucleolytic cleavage of DNA to give specific double-stranded fragments with terminal 5'-phosphates.. Functionally, a type III restriction enzyme that recognizes 2 inversely oriented double-stranded sequences 5'-CAGAG-3' and cleaves DNA 25-27 base pairs downstream. After binding to one recognition site undergoes random one-dimensional diffusion along DNA until it collides with a stationary enzyme bound to the second DNA site, which is when DNA cleavage occurs. DNA restriction requires both the Res and Mod subunits. The protein is Type III restriction-modification enzyme StyLTI Res subunit of Salmonella typhimurium (strain LT2 / SGSC1412 / ATCC 700720).